The following is a 454-amino-acid chain: Methylenetetrahydrofolate--tRNA-(uracil-5-)-methyltransferase TrmFO (454 aa).

9–14 (GAGLAG) provides a ligand contact to FAD. The interval 432–454 (LERVSPPSRETGEPTGAEQVDLA) is disordered.

Belongs to the MnmG family. TrmFO subfamily. Requires FAD as cofactor.

It is found in the cytoplasm. The catalysed reaction is uridine(54) in tRNA + (6R)-5,10-methylene-5,6,7,8-tetrahydrofolate + NADH + H(+) = 5-methyluridine(54) in tRNA + (6S)-5,6,7,8-tetrahydrofolate + NAD(+). It carries out the reaction uridine(54) in tRNA + (6R)-5,10-methylene-5,6,7,8-tetrahydrofolate + NADPH + H(+) = 5-methyluridine(54) in tRNA + (6S)-5,6,7,8-tetrahydrofolate + NADP(+). In terms of biological role, catalyzes the folate-dependent formation of 5-methyl-uridine at position 54 (M-5-U54) in all tRNAs. This is Methylenetetrahydrofolate--tRNA-(uracil-5-)-methyltransferase TrmFO from Pelobacter propionicus (strain DSM 2379 / NBRC 103807 / OttBd1).